The chain runs to 561 residues: MQIINWASLLLVTWETVVAAELPIVDLGYQRHQAIGFNSTGRYYQFSNVRYAEPPLGPLRFSLPVSPRNRSHEVVNGKGLGNICPQSQACWFNVQGDFVSAVTAGSTFNFTAAYDQVYQQDECTKPRPVADQNPLESEDCLFLDVYVPEKVISKRRDGNGKSNPGAPVLVYFQDGAYVSGSKSDQNPSGLIATSREDGSTGIIYVGVNYRLGVFGWLSGQKFQSEGGLPNAGLYDERLALEWVQRHITKFGGDPSRVTVMGVSAGGGSITMQLTAYGRAIRPPFAQIIAQSPAWEPGTKTPAIEDDLLDSFLTLLNVSSLEEARRLPSQALLDANYELVASRPYGSGVFGPAIDGSFVPDSPKRLLLERKVDPSVRILTSYTANEGFMLAPANVTDDATFNRYVDVLLRGANASVRAHTSRVLYPPIFNGSWPYHSQHERANLLWSEVSTTCNTRYLHQAVATPGYAIEYAVKPAMHLSDTSSVFYNGQGSSSSLNATIAQLMQRQIVQFVKTGNPNVKGDPHVPLYHGQAHVLSLGDNGVRVEPALTNTDRCTYWQQVEF.

The N-terminal stretch at 1-19 (MQIINWASLLLVTWETVVA) is a signal peptide. N-linked (GlcNAc...) asparagine glycans are attached at residues Asn38, Asn69, and Asn109. Residue Ser263 is the Acyl-ester intermediate of the active site. Residue Ser263 coordinates substrate. N-linked (GlcNAc...) asparagine glycosylation is present at Asn316. Catalysis depends on Glu385, which acts as the Charge relay system. Residues Asn393, Asn412, Asn429, and Asn496 are each glycosylated (N-linked (GlcNAc...) asparagine).

Belongs to the type-B carboxylesterase/lipase family.

The protein localises to the cytoplasm. The protein resides in the cytosol. It catalyses the reaction a carboxylic ester + H2O = an alcohol + a carboxylate + H(+). It participates in mycotoxin biosynthesis; patulin biosynthesis. Its function is as follows. Carboxylesterase; part of the gene cluster that mediates the biosynthesis of patulin, an acetate-derived tetraketide mycotoxin produced by several fungal species that shows antimicrobial properties against several bacteria. The function of patB in patulin synthesis has still to be characterized. The pathway begins with the synthesis of 6-methylsalicylic acid by the polyketide synthase (PKS) patK via condensation of acetate and malonate units. The 6-methylsalicylic acid decarboxylase patG then catalyzes the decarboxylation of 6-methylsalicylic acid to yield m-cresol (also known as 3-methylphenol). These first reactions occur in the cytosol. The intermediate m-cresol is then transported into the endoplasmic reticulum where the cytochrome P450 monooxygenase patH converts it to m-hydroxybenzyl alcohol, which is further converted to gentisyl alcohol by the cytochrome P450 monooxygenase patI. The oxidoreductases patJ and patO further convert gentisyl alcohol to isoepoxydon in the vacuole. PatN catalyzes then the transformation of isoepoxydon into phyllostine. The cluster protein patF is responsible for the conversion from phyllostine to neopatulin whereas the alcohol dehydrogenase patD converts neopatulin to E-ascladiol. The steps between isoepoxydon and E-ascladiol occur in the cytosol, and E-ascladiol is probably secreted to the extracellular space by one of the cluster-specific transporters patC or patM. Finally, the secreted patulin synthase patE catalyzes the conversion of E-ascladiol to patulin. The protein is Carboxylesterase patB of Penicillium expansum (Blue mold rot fungus).